We begin with the raw amino-acid sequence, 350 residues long: Hydroxymethylglutaryl-CoA synthase (350 aa).

The active-site Proton donor/acceptor is the glutamate 83. The active-site Acyl-thioester intermediate is cysteine 115. (3S)-3-hydroxy-3-methylglutaryl-CoA contacts are provided by cysteine 115 and threonine 156. CoA is bound at residue arginine 204. (3S)-3-hydroxy-3-methylglutaryl-CoA is bound by residues threonine 206 and histidine 239. Histidine 239 functions as the Proton donor/acceptor in the catalytic mechanism. Lysine 244 serves as a coordination point for CoA. Asparagine 271 and serine 301 together coordinate (3S)-3-hydroxy-3-methylglutaryl-CoA.

This sequence belongs to the thiolase-like superfamily. Archaeal HMG-CoA synthase family. In terms of assembly, interacts with acetoacetyl-CoA thiolase that catalyzes the precedent step in the pathway and with a DUF35 protein. The acetoacetyl-CoA thiolase/HMG-CoA synthase complex channels the intermediate via a fused CoA-binding site, which allows for efficient coupling of the endergonic thiolase reaction with the exergonic HMGCS reaction.

It carries out the reaction acetoacetyl-CoA + acetyl-CoA + H2O = (3S)-3-hydroxy-3-methylglutaryl-CoA + CoA + H(+). The protein operates within metabolic intermediate biosynthesis; (R)-mevalonate biosynthesis; (R)-mevalonate from acetyl-CoA: step 2/3. Functionally, catalyzes the condensation of acetyl-CoA with acetoacetyl-CoA to form 3-hydroxy-3-methylglutaryl-CoA (HMG-CoA). Functions in the mevalonate (MVA) pathway leading to isopentenyl diphosphate (IPP), a key precursor for the biosynthesis of isoprenoid compounds that are building blocks of archaeal membrane lipids. The protein is Hydroxymethylglutaryl-CoA synthase of Pyrococcus horikoshii (strain ATCC 700860 / DSM 12428 / JCM 9974 / NBRC 100139 / OT-3).